A 188-amino-acid polypeptide reads, in one-letter code: dCTP deaminase (188 aa).

DCTP is bound by residues 111–116 (KSTYAR), 135–137 (TLE), glutamine 156, tyrosine 170, and glutamine 180. The active-site Proton donor/acceptor is the glutamate 137.

Belongs to the dCTP deaminase family. Homotrimer.

The catalysed reaction is dCTP + H2O + H(+) = dUTP + NH4(+). It functions in the pathway pyrimidine metabolism; dUMP biosynthesis; dUMP from dCTP (dUTP route): step 1/2. Its function is as follows. Catalyzes the deamination of dCTP to dUTP. This is dCTP deaminase from Dichelobacter nodosus (strain VCS1703A).